Consider the following 361-residue polypeptide: Methylthioribose-1-phosphate isomerase (361 aa).

Catalysis depends on D245, which acts as the Proton donor.

Belongs to the eIF-2B alpha/beta/delta subunits family. MtnA subfamily.

The protein localises to the cytoplasm. Its subcellular location is the nucleus. It catalyses the reaction 5-(methylsulfanyl)-alpha-D-ribose 1-phosphate = 5-(methylsulfanyl)-D-ribulose 1-phosphate. It functions in the pathway amino-acid biosynthesis; L-methionine biosynthesis via salvage pathway; L-methionine from S-methyl-5-thio-alpha-D-ribose 1-phosphate: step 1/6. In terms of biological role, catalyzes the interconversion of methylthioribose-1-phosphate (MTR-1-P) into methylthioribulose-1-phosphate (MTRu-1-P). The chain is Methylthioribose-1-phosphate isomerase from Monosiga brevicollis (Choanoflagellate).